A 290-amino-acid polypeptide reads, in one-letter code: ATP synthase gamma chain (290 aa).

Belongs to the ATPase gamma chain family. In terms of assembly, F-type ATPases have 2 components, CF(1) - the catalytic core - and CF(0) - the membrane proton channel. CF(1) has five subunits: alpha(3), beta(3), gamma(1), delta(1), epsilon(1). CF(0) has three main subunits: a, b and c.

Its subcellular location is the cell inner membrane. Functionally, produces ATP from ADP in the presence of a proton gradient across the membrane. The gamma chain is believed to be important in regulating ATPase activity and the flow of protons through the CF(0) complex. This Desulfotalea psychrophila (strain LSv54 / DSM 12343) protein is ATP synthase gamma chain.